The chain runs to 212 residues: ER lumen protein-retaining receptor (212 aa).

Residues 1 to 2 lie on the Lumenal side of the membrane; it reads MN. Residues 3–21 traverse the membrane as a helical segment; the sequence is IFRFAGDLSHVFAIIILLL. Over 22–35 the chain is Cytoplasmic; it reads KIWKTRSCAGISGK. A helical membrane pass occupies residues 36–53; that stretch reads SQILFAVVYLTRYLDLFT. Topologically, residues 54-61 are lumenal; that stretch reads TYVSLYNS. The chain crosses the membrane as a helical span at residues 62 to 80; the sequence is VMKVLFLATSGATVYLMYV. Over 81-96 the chain is Cytoplasmic; it reads KFKATYDHNHDSFRIE. Residues 97–110 form a helical membrane-spanning segment; it reads FLLVPCALLSLVIN. Over 111–117 the chain is Lumenal; the sequence is HEFTVME. Residues 118–137 form a helical membrane-spanning segment; sequence VLWTFSIYLESVAILPQLFL. The Cytoplasmic segment spans residues 138–149; the sequence is VSRTGEAESITS. Residues 150–168 form a helical membrane-spanning segment; that stretch reads HYLFALGSYRALYLLNWVY. Residues 169-178 are Lumenal-facing; that stretch reads RYMVESHYDL. Residues 179–199 traverse the membrane as a helical segment; that stretch reads IAIFAGVVQTVLYCDFFYLYI. At 200-212 the chain is on the cytoplasmic side; that stretch reads TKVLKGKKLQLPA.

The protein belongs to the ERD2 family.

The protein localises to the endoplasmic reticulum membrane. Its function is as follows. Required for the retention of luminal endoplasmic reticulum proteins. Determines the specificity of the luminal ER protein retention system. Also required for normal vesicular traffic through the Golgi. The polypeptide is ER lumen protein-retaining receptor (KdelR) (Drosophila melanogaster (Fruit fly)).